The sequence spans 547 residues: Chaperonin GroEL 1 (547 aa).

Residues T30–P33, K51, D87–T91, G415, and D496 each bind ATP.

It belongs to the chaperonin (HSP60) family. As to quaternary structure, forms a cylinder of 14 subunits composed of two heptameric rings stacked back-to-back. Interacts with the co-chaperonin GroES.

It is found in the cytoplasm. The catalysed reaction is ATP + H2O + a folded polypeptide = ADP + phosphate + an unfolded polypeptide.. Its function is as follows. Together with its co-chaperonin GroES, plays an essential role in assisting protein folding. The GroEL-GroES system forms a nano-cage that allows encapsulation of the non-native substrate proteins and provides a physical environment optimized to promote and accelerate protein folding. The protein is Chaperonin GroEL 1 of Gluconacetobacter diazotrophicus (strain ATCC 49037 / DSM 5601 / CCUG 37298 / CIP 103539 / LMG 7603 / PAl5).